The primary structure comprises 123 residues: Large ribosomal subunit protein uL14c (123 aa).

It belongs to the universal ribosomal protein uL14 family. As to quaternary structure, part of the 50S ribosomal subunit.

Its subcellular location is the plastid. The protein resides in the chloroplast. In terms of biological role, binds to 23S rRNA. The polypeptide is Large ribosomal subunit protein uL14c (Sorghum bicolor (Sorghum)).